The sequence spans 144 residues: Transcriptional regulator SlyA (144 aa).

In terms of domain architecture, HTH marR-type spans 2–135 (ESPLGSDLAR…LITLIAKLEH (134 aa)). The H-T-H motif DNA-binding region spans 49–72 (QIQLAKAIGIEQPSLVRTLDQLEE).

It belongs to the SlyA family. In terms of assembly, homodimer.

Transcription regulator that can specifically activate or repress expression of target genes. This Shigella boydii serotype 18 (strain CDC 3083-94 / BS512) protein is Transcriptional regulator SlyA.